A 481-amino-acid chain; its full sequence is Glutamyl-tRNA(Gln) amidotransferase subunit A (481 aa).

Residues Lys-74 and Ser-149 each act as charge relay system in the active site. Residue Ser-173 is the Acyl-ester intermediate of the active site.

Belongs to the amidase family. GatA subfamily. As to quaternary structure, heterotrimer of A, B and C subunits.

The catalysed reaction is L-glutamyl-tRNA(Gln) + L-glutamine + ATP + H2O = L-glutaminyl-tRNA(Gln) + L-glutamate + ADP + phosphate + H(+). In terms of biological role, allows the formation of correctly charged Gln-tRNA(Gln) through the transamidation of misacylated Glu-tRNA(Gln) in organisms which lack glutaminyl-tRNA synthetase. The reaction takes place in the presence of glutamine and ATP through an activated gamma-phospho-Glu-tRNA(Gln). In Francisella philomiragia subsp. philomiragia (strain ATCC 25017 / CCUG 19701 / FSC 153 / O#319-036), this protein is Glutamyl-tRNA(Gln) amidotransferase subunit A.